The primary structure comprises 821 residues: TORTIFOLIA1-like protein 1 (821 aa).

5 HEAT repeats span residues 69 to 110, 114 to 151, 163 to 201, 205 to 242, and 245 to 282; these read PDSP…SYTD, SQLA…QFLK, SSLV…SATE, AAFQ…VGAI, and QSLE…HSSS. S406 carries the phosphoserine modification. Disordered stretches follow at residues 416-437 and 553-610; these read PSRQ…NTSV and MSIQ…RAWD. Residues 501-554 adopt a coiled-coil conformation; that stretch reads PPLQRQLLHLERQQTHIMNMLQDFMGGSHDGMISLENRVRGLERIVEEMSREMS. The span at 579-590 shows a compositional bias: polar residues; the sequence is YGPSSRNTQTST.

In terms of tissue distribution, expressed at low levels in roots, hypocotyls, stems, flowers, siliques, cotyledons, and leaves. Particularly present in hydathodes of cotyledons and root hairs.

It is found in the cytoplasm. The protein resides in the cytoskeleton. In terms of biological role, plant-specific microtubule-associated protein (MAP) that regulates the orientation of cortical microtubules and the direction of organ growth. In Arabidopsis thaliana (Mouse-ear cress), this protein is TORTIFOLIA1-like protein 1.